Consider the following 202-residue polypeptide: Ion-translocating oxidoreductase complex subunit G (202 aa).

The helical transmembrane segment at 11-31 (AILLALIALICTALSTGIYLL) threads the bilayer. Thr-177 is modified (FMN phosphoryl threonine).

It belongs to the RnfG family. The complex is composed of six subunits: RnfA, RnfB, RnfC, RnfD, RnfE and RnfG. The cofactor is FMN.

It is found in the cell inner membrane. Part of a membrane-bound complex that couples electron transfer with translocation of ions across the membrane. The protein is Ion-translocating oxidoreductase complex subunit G of Pasteurella multocida (strain Pm70).